We begin with the raw amino-acid sequence, 155 residues long: Small ribosomal subunit protein uS7 (155 aa).

It belongs to the universal ribosomal protein uS7 family. As to quaternary structure, part of the 30S ribosomal subunit. Contacts proteins S9 and S11.

One of the primary rRNA binding proteins, it binds directly to 16S rRNA where it nucleates assembly of the head domain of the 30S subunit. Is located at the subunit interface close to the decoding center, probably blocks exit of the E-site tRNA. The polypeptide is Small ribosomal subunit protein uS7 (Chlorobium phaeobacteroides (strain DSM 266 / SMG 266 / 2430)).